We begin with the raw amino-acid sequence, 247 residues long: Eukaryotic translation initiation factor 6 (247 aa).

Serine 174 and serine 175 each carry phosphoserine; by CK1.

The protein belongs to the eIF-6 family. Monomer. Associates with the 60S ribosomal subunit. Phosphorylation at Ser-174 and Ser-175 promotes nuclear export.

It localises to the cytoplasm. Its subcellular location is the nucleus. It is found in the nucleolus. Binds to the 60S ribosomal subunit and prevents its association with the 40S ribosomal subunit to form the 80S initiation complex in the cytoplasm. Is also involved in ribosome biogenesis. Associates with pre-60S subunits in the nucleus and is involved in its nuclear export. In Emericella nidulans (strain FGSC A4 / ATCC 38163 / CBS 112.46 / NRRL 194 / M139) (Aspergillus nidulans), this protein is Eukaryotic translation initiation factor 6 (tif6).